Here is a 657-residue protein sequence, read N- to C-terminus: Tyramine beta-hydroxylase (657 aa).

The helical transmembrane segment at 77–97 (VALLFLLVAYCGGVVHAGEIV) threads the bilayer. Positions 103–214 (TNVTVKWHTD…GTTQFYIAAS (112 aa)) constitute a DOMON domain. N-linked (GlcNAc...) asparagine glycosylation is found at N104 and N143. Y278 is a catalytic residue. Cystine bridges form between C280-C330 and C319-C342. Cu(2+) contacts are provided by H312 and H313. Residues H380, H458, H460, and M533 each contribute to the Cu(2+) site. Disulfide bonds link C437-C549, C441-C606, and C512-C534. H458 is an active-site residue. N555 carries N-linked (GlcNAc...) asparagine glycosylation.

This sequence belongs to the copper type II ascorbate-dependent monooxygenase family. It depends on Cu(2+) as a cofactor. Present in synaptic regions of RIC interneurons. Present in gonadal sheath cells of hermaphrodites (at protein level).

It is found in the membrane. The enzyme catalyses tyramine + L-ascorbate + O2 = (R)-octopamine + L-dehydroascorbate + H2O. In terms of biological role, required for the conversion of tyramine to octopamine, a precursor of octapamine but probably itself a neurotransmitter. Involved in the regulation of egg laying, which is inhibited by tyramine. Due to its involvement in octopamine biosynthesis, also required for crtc-1-dependent regulation of AMPK-mediated longevity. This Caenorhabditis elegans protein is Tyramine beta-hydroxylase.